We begin with the raw amino-acid sequence, 312 residues long: Methionyl-tRNA formyltransferase (312 aa).

Residue 112 to 115 coordinates (6S)-5,6,7,8-tetrahydrofolate; it reads SLLP.

The protein belongs to the Fmt family.

It carries out the reaction L-methionyl-tRNA(fMet) + (6R)-10-formyltetrahydrofolate = N-formyl-L-methionyl-tRNA(fMet) + (6S)-5,6,7,8-tetrahydrofolate + H(+). Its function is as follows. Attaches a formyl group to the free amino group of methionyl-tRNA(fMet). The formyl group appears to play a dual role in the initiator identity of N-formylmethionyl-tRNA by promoting its recognition by IF2 and preventing the misappropriation of this tRNA by the elongation apparatus. This Syntrophus aciditrophicus (strain SB) protein is Methionyl-tRNA formyltransferase.